A 415-amino-acid chain; its full sequence is Cysteate synthase (415 aa).

K104 is subject to N6-(pyridoxal phosphate)lysine. Positions 131 and 376 each coordinate pyridoxal 5'-phosphate.

It belongs to the threonine synthase family. Cysteate synthase subfamily. Homotrimer. It depends on pyridoxal 5'-phosphate as a cofactor.

It carries out the reaction O-phospho-L-serine + sulfite + H(+) = L-cysteate + phosphate. The protein operates within cofactor biosynthesis; coenzyme M biosynthesis. Functionally, specifically catalyzes the beta-elimination of phosphate from L-phosphoserine and the beta-addition of sulfite to the dehydroalanine intermediate to produce L-cysteate. The sequence is that of Cysteate synthase from Methanothrix thermoacetophila (strain DSM 6194 / JCM 14653 / NBRC 101360 / PT) (Methanosaeta thermophila).